The following is a 1738-amino-acid chain: Sodium leak channel NALCN (1738 aa).

Topologically, residues 1 to 36 (MLKRKQSSRVEAQPVTDFGPDESLSDNADILWINKP) are cytoplasmic. Residues 37–57 (WVHSLLRICAIISVISVCMNT) form a helical membrane-spanning segment. At 58-65 (PMTFEHYP) the chain is on the extracellular side. Residues 66 to 90 (PLQYVTFTLDTLLMFLYTAEMIAKM) traverse the membrane as a helical segment. Residues 91-106 (HIRGIVKGDSSYVKDR) lie on the Cytoplasmic side of the membrane. A helical membrane pass occupies residues 107–129 (WCVFDGFMVFCLWVSLVLQVFEI). Over 130–137 (ADIVDQMS) the chain is Extracellular. The chain crosses the membrane as a helical; Voltage-sensor span at residues 138 to 158 (PWGMLRIPRPLIMIRAFRIYF). Topologically, residues 159 to 173 (RFELPRTRITNILKR) are cytoplasmic. The chain crosses the membrane as a helical span at residues 174–199 (SGEQIWSVSIFLLFFLLLYGILGVQM). Over 200–269 (FGTFTYHCVV…YSGFNEIGTS (70 aa)) the chain is Extracellular. Intrachain disulfides connect C207-C239 and C229-C245. N-linked (GlcNAc...) asparagine glycans are attached at residues N210 and N216. Positions 270–289 (IFTVYEAASQEGWVFLMYRA) form an intramembrane region, pore-forming. Residues 290-294 (IDSFP) lie on the Extracellular side of the membrane. A helical transmembrane segment spans residues 295 to 322 (RWRSYFYFITLIFFLAWLVKNVFIAVII). The Cytoplasmic segment spans residues 323 to 382 (ETFAEIRVQFQQMWGSRSSTTSTATTQMFHEDAAGGWQLVAVDVNKPQGRAPACLQKMMR). The chain crosses the membrane as a helical span at residues 383–403 (SSVFHMFILSMVTVDVIVAAS). Residues 404 to 416 (NYYKGENFRRQYD) lie on the Extracellular side of the membrane. A helical transmembrane segment spans residues 417-439 (EFYLAEVAFTVLFDLEALLKIWC). The Cytoplasmic portion of the chain corresponds to 440–447 (LGFTGYIS). The chain crosses the membrane as a helical span at residues 448–468 (SSLHKFELLLVIGTTLHVYPD). The Extracellular segment spans residues 469–472 (LYHS). Residues 473 to 492 (QFTYFQVLRVVRLIKISPAL) traverse the membrane as a helical; Voltage-sensor segment. Over 493–502 (EDFVYKIFGP) the chain is Cytoplasmic. Residues 503 to 530 (GKKLGSLVVFTASLLIVMSAISLQMFCF) traverse the membrane as a helical segment. The Extracellular segment spans residues 531–543 (VEELDRFTTFPRA). The pore-forming intramembrane region spans 544–563 (FMSMFQILTQEGWVDVMDQT). Topologically, residues 564–569 (LNAVGH) are extracellular. Residues 570–599 (MWAPVVAIYFILYHLFATLILLSLFVAVIL) traverse the membrane as a helical segment. Topologically, residues 600–886 (DNLELDEDLK…QLYDLLGLVT (287 aa)) are cytoplasmic. Positions 762-785 (QERRSLRHGSNSQRISRGKSLETL) are disordered. A coiled-coil region spans residues 795 to 830 (YRNAQREDSEIKMIQEKKEQAEMKRKVQEEELRENH). The helical transmembrane segment at 887-906 (YLDWVMIIVTICSCISMMFE) threads the bilayer. Over 907–915 (SPFRRVMHA) the chain is Extracellular. The chain crosses the membrane as a helical span at residues 916–939 (PTLQIAEYVFVIFMSIELNLKIMA). At 940-947 (DGLFFTPT) the chain is on the cytoplasmic side. The helical transmembrane segment at 948–972 (AVIRDFGGVMDIFIYLVSLIFLCWM) threads the bilayer. The Extracellular portion of the chain corresponds to 973–980 (PQNVPAES). A helical; Voltage-sensor membrane pass occupies residues 981 to 1003 (GAQLLMVLRCLRPLRIFKLVPQM). Topologically, residues 1004-1015 (RKVVRELFSGFK) are cytoplasmic. Residues 1016–1039 (EIFLVSILLLTLMLVFASFGVQLF) form a helical membrane-spanning segment. The Extracellular segment spans residues 1040–1104 (AGKLAKCNDP…NFNFDNVGNA (65 aa)). C1046 and C1057 are disulfide-bonded. Residue N1064 is glycosylated (N-linked (GlcNAc...) asparagine). Residues 1105–1124 (MLALFEVLSLKGWVEVRDVI) constitute an intramembrane region (pore-forming). At 1125 to 1129 (IHRVG) the chain is on the extracellular side. The helical transmembrane segment at 1130–1159 (PIHGIYIHVFVFLGCMIGLTLFVGVVIANF) threads the bilayer. Residues 1160–1210 (NENKGTALLTVDQRRWEDLKSRLKIAQPLHLPPRPDNDGFRAKMYDITQHP) are Cytoplasmic-facing. A helical transmembrane segment spans residues 1211–1227 (FFKRTIALLVLAQSVLL). Topologically, residues 1228-1236 (SVKWDVEDP) are extracellular. The chain crosses the membrane as a helical span at residues 1237 to 1260 (VTVPLATMSVVFTFIFVLEVTMKI). Topologically, residues 1261-1271 (IAMSPAGFWQS) are cytoplasmic. Residues 1272–1293 (RRNRYDLLVTSLGVVWVVLHFA) traverse the membrane as a helical segment. The Extracellular segment spans residues 1294-1296 (LLN). The helical; Voltage-sensor transmembrane segment at 1297-1318 (AYTYMMGACVIVFRFFSICGKH) threads the bilayer. The Cytoplasmic segment spans residues 1319-1331 (VTLKMLLLTVVVS). Residues 1332–1357 (MYKSFFIIVGMFLLLLCYAFAGVVLF) form a helical membrane-spanning segment. The Extracellular segment spans residues 1358-1378 (GTVKYGENINRHANFSSAGKA). An intramembrane region (pore-forming) is located at residues 1379-1398 (ITVLFRIVTGEDWNKIMHDC). The Extracellular portion of the chain corresponds to 1399–1420 (MVQPPFCTPDEFTYWATDCGNY). The cysteines at positions 1405 and 1417 are disulfide-linked. Residues 1421–1447 (AGALMYFCSFYVIIAYIMLNLLVAIIV) traverse the membrane as a helical segment. At 1448 to 1738 (ENFSLFYSTE…DESGDDLLDI (291 aa)) the chain is on the cytoplasmic side. The disordered stretch occupies residues 1611–1678 (PPSIETTQPS…QWRLPSAPKP (68 aa)). Polar residues predominate over residues 1613–1632 (SIETTQPSEDTNANSQDNSM). Over residues 1633-1648 (QPETSSQQQLLSPTLS) the composition is skewed to low complexity.

It belongs to the NALCN family. As to quaternary structure, found in a complex with NALCN, UNC79, UNC80 and NACL1; these auxiliary subunits are indispensable for the function of NALCN channel. Interacts with UNC80; required for the NALCN activation/inhibition by GPCRs in neurons. Found in a complex with NALCN, UNC79 and UNC80; UNC80 bridges NALCN to UNC79. Interacts with CHRM3. Phosphorylated on tyrosine residues.

Its subcellular location is the cell membrane. It catalyses the reaction Na(+)(in) = Na(+)(out). Its activity is regulated as follows. Inhibited by low micromolar concentrations of Gd(3+) and high micromolar concentrations of verapamil. Insensitive to tetrodotoxin (TTX) and potentiated by low external Ca(2+) concentration. Its function is as follows. Voltage-gated ion channel responsible for the resting Na(+) permeability that controls neuronal excitability. NALCN channel functions as a multi-protein complex, which consists at least of NALCN, NALF1, UNC79 and UNC80. NALCN is the voltage-sensing, pore-forming subunit of the NALCN channel complex. NALCN channel complex is constitutively active and conducts monovalent cations but is blocked by physiological concentrations of extracellular divalent cations. In addition to its role in regulating neuronal excitability, is required for normal respiratory rhythm, systemic osmoregulation by controlling the serum sodium concentration and in the regulation of the intestinal pace-making activity in the interstitial cells of Cajal. NALCN channel is also activated by neuropeptides such as neurotensin and substance P (SP) through a SRC family kinases-dependent pathway. In addition, NALCN activity is enhanced/modulated by several GPCRs, such as CHRM3. The chain is Sodium leak channel NALCN from Homo sapiens (Human).